Here is a 175-residue protein sequence, read N- to C-terminus: Major pollen allergen Pha a 5.4 (175 aa).

It belongs to the Poa p IX/Phl p VI allergen family.

The sequence is that of Major pollen allergen Pha a 5.4 from Phalaris aquatica (Canary grass).